We begin with the raw amino-acid sequence, 1077 residues long: Zinc finger protein 518B (1077 aa).

The span at 9 to 30 shows a compositional bias: polar residues; it reads YTTQVNGGPSSLTMSPKQPNRA. The interval 9 to 35 is disordered; that stretch reads YTTQVNGGPSSLTMSPKQPNRATRTER. 2 consecutive C2H2-type zinc fingers follow at residues 160–182 and 188–211; these read FICS…LVKH and YRCE…RRVH. Positions 372-397 are disordered; sequence TSRGDGGTSECLSTEKGSGGQKKMLS. Lys479 is covalently cross-linked (Glycyl lysine isopeptide (Lys-Gly) (interchain with G-Cter in SUMO2)). Disordered stretches follow at residues 561–585, 599–622, 675–739, and 825–852; these read LVSS…GQVS, GEDK…ETAG, KPSS…GSRQ, and QPLT…RKED. A compositionally biased stretch (basic and acidic residues) spans 564–574; it reads SDRKLEDKQME. 2 stretches are compositionally biased toward polar residues: residues 605-621 and 675-688; these read SQQP…SETA and KPSS…QRRS. Glycyl lysine isopeptide (Lys-Gly) (interchain with G-Cter in SUMO2) cross-links involve residues Lys847 and Lys861. The segment at 895-914 is disordered; it reads QVNSTKKKNKMQANPGRYFK. A C2H2-type 3 zinc finger spans residues 1039-1061; it reads FKCWFCGRLYEDQEEWMSHGQRH.

This sequence belongs to the krueppel C2H2-type zinc-finger protein family.

The protein localises to the nucleus. Functionally, through its association with the EHMT1-EHMT2/G9A and PRC2/EED-EZH2 histone methyltransferase complexes may function in gene silencing, regulating repressive post-translational methylation of histone tails at promoters of target genes. The sequence is that of Zinc finger protein 518B (Znf518b) from Mus musculus (Mouse).